A 590-amino-acid chain; its full sequence is Urease subunit alpha (590 aa).

Positions 134–590 (GGIDSHIHFI…LPLAQRYFLF (457 aa)) constitute a Urease domain. The Ni(2+) site is built by H139, H141, and K222. N6-carboxylysine is present on K222. H224 contributes to the substrate binding site. The Ni(2+) site is built by H251 and H277. The active-site Proton donor is the H325. D365 lines the Ni(2+) pocket. Residues 388-416 (QQRGWLSPPAAGQGAGLSSAAGQGVDHDT) form a disordered region. Low complexity predominate over residues 393 to 411 (LSPPAAGQGAGLSSAAGQG).

The protein belongs to the metallo-dependent hydrolases superfamily. Urease alpha subunit family. As to quaternary structure, heterotrimer of UreA (gamma), UreB (beta) and UreC (alpha) subunits. Three heterotrimers associate to form the active enzyme. The cofactor is Ni cation. Carboxylation allows a single lysine to coordinate two nickel ions.

Its subcellular location is the cytoplasm. The enzyme catalyses urea + 2 H2O + H(+) = hydrogencarbonate + 2 NH4(+). It participates in nitrogen metabolism; urea degradation; CO(2) and NH(3) from urea (urease route): step 1/1. This chain is Urease subunit alpha, found in Verminephrobacter eiseniae (strain EF01-2).